The primary structure comprises 763 residues: Xaa-Pro dipeptidyl-peptidase (763 aa).

Catalysis depends on charge relay system residues S348, D468, and H498.

This sequence belongs to the peptidase S15 family. Homodimer.

It localises to the cytoplasm. The enzyme catalyses Hydrolyzes Xaa-Pro-|- bonds to release unblocked, N-terminal dipeptides from substrates including Ala-Pro-|-p-nitroanilide and (sequentially) Tyr-Pro-|-Phe-Pro-|-Gly-Pro-|-Ile.. Its function is as follows. Removes N-terminal dipeptides sequentially from polypeptides having unsubstituted N-termini provided that the penultimate residue is proline. The sequence is that of Xaa-Pro dipeptidyl-peptidase (pepX) from Lactococcus lactis subsp. cremoris (Streptococcus cremoris).